The primary structure comprises 112 residues: Small ribosomal subunit protein bS6 (112 aa).

Belongs to the bacterial ribosomal protein bS6 family.

In terms of biological role, binds together with bS18 to 16S ribosomal RNA. The polypeptide is Small ribosomal subunit protein bS6 (rpsF) (Chlamydia muridarum (strain MoPn / Nigg)).